A 188-amino-acid chain; its full sequence is Elongation factor P (188 aa).

This sequence belongs to the elongation factor P family.

It is found in the cytoplasm. Its pathway is protein biosynthesis; polypeptide chain elongation. Functionally, involved in peptide bond synthesis. Stimulates efficient translation and peptide-bond synthesis on native or reconstituted 70S ribosomes in vitro. Probably functions indirectly by altering the affinity of the ribosome for aminoacyl-tRNA, thus increasing their reactivity as acceptors for peptidyl transferase. This chain is Elongation factor P, found in Chlorobium chlorochromatii (strain CaD3).